The following is an 879-amino-acid chain: Leucine--tRNA ligase (879 aa).

A 'HIGH' region motif is present at residues 45-55 (PYPSGALHMGH). Positions 637–641 (KMSKS) match the 'KMSKS' region motif. Lysine 640 contacts ATP.

The protein belongs to the class-I aminoacyl-tRNA synthetase family.

It localises to the cytoplasm. The enzyme catalyses tRNA(Leu) + L-leucine + ATP = L-leucyl-tRNA(Leu) + AMP + diphosphate. This Xylella fastidiosa (strain M23) protein is Leucine--tRNA ligase.